The sequence spans 361 residues: Phospho-N-acetylmuramoyl-pentapeptide-transferase (361 aa).

10 helical membrane-spanning segments follow: residues 25–45 (RAVM…PWVI), 73–93 (TMGG…WADL), 97–117 (YVWL…YDDW), 132–152 (FKMA…IATA), 167–187 (TVAY…VIVG), 200–220 (GLAA…AYVA), 240–260 (VVVF…FNAY), 264–284 (VFMG…VAVI), 289–309 (IVLF…MIQV), and 338–358 (QVVV…LSTL).

Belongs to the glycosyltransferase 4 family. MraY subfamily. The cofactor is Mg(2+).

It is found in the cell inner membrane. The catalysed reaction is UDP-N-acetyl-alpha-D-muramoyl-L-alanyl-gamma-D-glutamyl-meso-2,6-diaminopimeloyl-D-alanyl-D-alanine + di-trans,octa-cis-undecaprenyl phosphate = di-trans,octa-cis-undecaprenyl diphospho-N-acetyl-alpha-D-muramoyl-L-alanyl-D-glutamyl-meso-2,6-diaminopimeloyl-D-alanyl-D-alanine + UMP. It functions in the pathway cell wall biogenesis; peptidoglycan biosynthesis. In terms of biological role, catalyzes the initial step of the lipid cycle reactions in the biosynthesis of the cell wall peptidoglycan: transfers peptidoglycan precursor phospho-MurNAc-pentapeptide from UDP-MurNAc-pentapeptide onto the lipid carrier undecaprenyl phosphate, yielding undecaprenyl-pyrophosphoryl-MurNAc-pentapeptide, known as lipid I. The chain is Phospho-N-acetylmuramoyl-pentapeptide-transferase from Chromobacterium violaceum (strain ATCC 12472 / DSM 30191 / JCM 1249 / CCUG 213 / NBRC 12614 / NCIMB 9131 / NCTC 9757 / MK).